We begin with the raw amino-acid sequence, 558 residues long: Receptor-like kinase LIP2 (558 aa).

Residues 1 to 45 (MHCFPCFSSPKNKKSSTTNETNDNNEPKPDDRRRAEETEEIEQSE) are disordered. Over residues 15-24 (SSTTNETNDN) the composition is skewed to low complexity. The span at 25-36 (NEPKPDDRRRAE) shows a compositional bias: basic and acidic residues. Thr-53 is modified (phosphothreonine). The 280-residue stretch at 64–343 (FRQECLLGEG…SDVMVALSFL (280 aa)) folds into the Protein kinase domain. Residues 70-78 (LGEGGFGRV) and Lys-93 each bind ATP. The residue at position 138 (Tyr-138) is a Phosphotyrosine. The Proton acceptor role is filled by Asp-191. Phosphoserine is present on residues Ser-195 and Ser-227. A Phosphothreonine modification is found at Thr-233. Tyr-241 is modified (phosphotyrosine). The segment at 372 to 558 (HDSNLVSPPP…SDVAIDSIKE (187 aa)) is disordered. Positions 401–418 (ESEKESVSKNEYKKKHEE) are enriched in basic and acidic residues. Residues 419–431 (EDSSMESDDESDS) show a composition bias toward acidic residues. Residues 432–448 (NSEHEKDQPPKPIDEKN) are compositionally biased toward basic and acidic residues. The span at 473–486 (SKSSQKSNDESTSS) shows a compositional bias: low complexity. 3 stretches are compositionally biased toward basic and acidic residues: residues 488–500 (YDSD…KGKE), 508–524 (EEKH…KTDD), and 547–558 (IKSDVAIDSIKE).

This sequence belongs to the protein kinase superfamily. Ser/Thr protein kinase family. Interacts with PRK6. Post-translationally, palmitoylated. In terms of tissue distribution, expressed in mature pollen and in germinating pollen tubes.

The protein resides in the cell membrane. Involved in pollen tube guidance into micropyle. Participates in perception of the ovule-secreted peptide signal LURE1. This chain is Receptor-like kinase LIP2, found in Arabidopsis thaliana (Mouse-ear cress).